The primary structure comprises 154 residues: Lipoprotein signal peptidase (154 aa).

Helical transmembrane passes span 52-72 and 85-105; these read ILAG…IGIV and LGVA…DRAV. Residues aspartate 111 and aspartate 129 contribute to the active site. The helical transmembrane segment at 124-144 threads the bilayer; the sequence is IFNIADSSLCVGVMLLFIQML.

The protein belongs to the peptidase A8 family.

The protein resides in the cell membrane. The catalysed reaction is Release of signal peptides from bacterial membrane prolipoproteins. Hydrolyzes -Xaa-Yaa-Zaa-|-(S,diacylglyceryl)Cys-, in which Xaa is hydrophobic (preferably Leu), and Yaa (Ala or Ser) and Zaa (Gly or Ala) have small, neutral side chains.. It participates in protein modification; lipoprotein biosynthesis (signal peptide cleavage). Its function is as follows. This protein specifically catalyzes the removal of signal peptides from prolipoproteins. The chain is Lipoprotein signal peptidase from Bacillus subtilis (strain 168).